We begin with the raw amino-acid sequence, 95 residues long: Small ribosomal subunit protein bS20 (95 aa).

It belongs to the bacterial ribosomal protein bS20 family.

Its function is as follows. Binds directly to 16S ribosomal RNA. This chain is Small ribosomal subunit protein bS20, found in Fervidobacterium nodosum (strain ATCC 35602 / DSM 5306 / Rt17-B1).